The following is a 405-amino-acid chain: Opine dehydrogenase (405 aa).

It belongs to the lysopine/nopaline/octopine/opine/vitopine dehydrogenases family.

The chain is Opine dehydrogenase from Haliotis discus hannai (Japanese abalone).